The following is a 230-amino-acid chain: Tol-Pal system protein TolQ (230 aa).

3 helical membrane-spanning segments follow: residues 16–36, 139–159, and 171–191; these read LVKL…AIII, YIGL…LGAV, and IAEA…AVMA.

Belongs to the ExbB/TolQ family. The Tol-Pal system is composed of five core proteins: the inner membrane proteins TolA, TolQ and TolR, the periplasmic protein TolB and the outer membrane protein Pal. They form a network linking the inner and outer membranes and the peptidoglycan layer.

It localises to the cell inner membrane. Functionally, part of the Tol-Pal system, which plays a role in outer membrane invagination during cell division and is important for maintaining outer membrane integrity. Required, with TolR, for the proton motive force-dependent activation of TolA and for TolA-Pal interaction. The sequence is that of Tol-Pal system protein TolQ from Escherichia coli O157:H7.